Consider the following 336-residue polypeptide: tRNA N6-adenosine threonylcarbamoyltransferase (336 aa).

The Fe cation site is built by H114 and H118. Substrate is bound by residues 136–140 (LVSGG), D169, G182, D186, and N275. Position 301 (D301) interacts with Fe cation.

The protein belongs to the KAE1 / TsaD family. Requires Fe(2+) as cofactor.

The protein localises to the cytoplasm. It catalyses the reaction L-threonylcarbamoyladenylate + adenosine(37) in tRNA = N(6)-L-threonylcarbamoyladenosine(37) in tRNA + AMP + H(+). Its function is as follows. Required for the formation of a threonylcarbamoyl group on adenosine at position 37 (t(6)A37) in tRNAs that read codons beginning with adenine. Is involved in the transfer of the threonylcarbamoyl moiety of threonylcarbamoyl-AMP (TC-AMP) to the N6 group of A37, together with TsaE and TsaB. TsaD likely plays a direct catalytic role in this reaction. In Streptococcus pneumoniae (strain P1031), this protein is tRNA N6-adenosine threonylcarbamoyltransferase.